The following is a 488-amino-acid chain: Phenylalanine--tRNA ligase alpha subunit (488 aa).

L-phenylalanine-binding positions include T332, 371 to 373, and F410; that span reads QLD. Position 412 (E412) interacts with Mg(2+). An L-phenylalanine-binding site is contributed by F435.

It belongs to the class-II aminoacyl-tRNA synthetase family. Phe-tRNA synthetase alpha subunit type 2 subfamily. In terms of assembly, tetramer of two alpha and two beta subunits. Requires Mg(2+) as cofactor.

The protein localises to the cytoplasm. The enzyme catalyses tRNA(Phe) + L-phenylalanine + ATP = L-phenylalanyl-tRNA(Phe) + AMP + diphosphate + H(+). In Aeropyrum pernix (strain ATCC 700893 / DSM 11879 / JCM 9820 / NBRC 100138 / K1), this protein is Phenylalanine--tRNA ligase alpha subunit.